The sequence spans 130 residues: Small ribosomal subunit protein uS8 (130 aa).

At lysine 88 the chain carries N6-succinyllysine.

It belongs to the universal ribosomal protein uS8 family. In terms of assembly, component of the 40S ribosomal subunit. Part of the small subunit (SSU) processome, composed of more than 70 proteins and the RNA chaperone small nucleolar RNA (snoRNA) U3.

Its subcellular location is the cytoplasm. The protein localises to the nucleus. It is found in the nucleolus. Its function is as follows. Component of the small ribosomal subunit. Part of the small subunit (SSU) processome, first precursor of the small eukaryotic ribosomal subunit. During the assembly of the SSU processome in the nucleolus, many ribosome biogenesis factors, an RNA chaperone and ribosomal proteins associate with the nascent pre-rRNA and work in concert to generate RNA folding, modifications, rearrangements and cleavage as well as targeted degradation of pre-ribosomal RNA by the RNA exosome. Required for proper erythropoiesis. The chain is Small ribosomal subunit protein uS8 (RPS15A) from Pongo abelii (Sumatran orangutan).